Here is an 87-residue protein sequence, read N- to C-terminus: U15-lycotoxin-Ls1h (87 aa).

The signal sequence occupies residues 1 to 20 (MNSKIFAVLLLLGLLSCVLS). In terms of domain architecture, WAP spans 21–66 (DQYCPKSSITACKKMNTRNDCCKDDDCTGGSWCCATPCGNFCKYPT). 5 disulfides stabilise this stretch: cysteine 24-cysteine 54, cysteine 32-cysteine 58, cysteine 41-cysteine 53, cysteine 42-cysteine 80, and cysteine 47-cysteine 62.

It belongs to the venom protein 11 family. 01 (wap-1) subfamily. Post-translationally, contains 5 disulfide bonds. In terms of tissue distribution, expressed by the venom gland.

The protein resides in the secreted. Functionally, has antibacterial activity. In Lycosa singoriensis (Wolf spider), this protein is U15-lycotoxin-Ls1h.